The sequence spans 220 residues: Small ribosomal subunit protein uS3c (220 aa).

One can recognise a KH type-2 domain in the interval 48-119 (VQKHTNNPFH…KLCLILIKID (72 aa)).

This sequence belongs to the universal ribosomal protein uS3 family. As to quaternary structure, part of the 30S ribosomal subunit.

Its subcellular location is the plastid. It localises to the chloroplast. The protein is Small ribosomal subunit protein uS3c (rps3) of Psilotum nudum (Whisk fern).